The primary structure comprises 347 residues: Dihydroorotate dehydrogenase (quinone) (347 aa).

FMN is bound by residues 62–66 (AGLDK) and threonine 86. Substrate is bound at residue lysine 66. 111–115 (NRMGF) lines the substrate pocket. Asparagine 142 and asparagine 175 together coordinate FMN. Position 175 (asparagine 175) interacts with substrate. The active-site Nucleophile is serine 178. Asparagine 180 provides a ligand contact to substrate. Positions 220 and 248 each coordinate FMN. 249 to 250 (NT) provides a ligand contact to substrate. FMN is bound by residues glycine 271, glycine 300, and 321-322 (YS).

This sequence belongs to the dihydroorotate dehydrogenase family. Type 2 subfamily. As to quaternary structure, monomer. FMN is required as a cofactor.

Its subcellular location is the cell membrane. The catalysed reaction is (S)-dihydroorotate + a quinone = orotate + a quinol. Its pathway is pyrimidine metabolism; UMP biosynthesis via de novo pathway; orotate from (S)-dihydroorotate (quinone route): step 1/1. In terms of biological role, catalyzes the conversion of dihydroorotate to orotate with quinone as electron acceptor. The chain is Dihydroorotate dehydrogenase (quinone) from Dechloromonas aromatica (strain RCB).